The primary structure comprises 146 residues: Globin-2B (146 aa).

One can recognise a Globin domain in the interval 9–146 (QLTADVKKDL…KLVGVVQAAL (138 aa)). His-101 provides a ligand contact to heme b.

This sequence belongs to the globin family. In terms of assembly, homodimer.

This Anadara trapezia (Sydney cockle) protein is Globin-2B.